The following is a 602-amino-acid chain: Threonine--tRNA ligase (602 aa).

The interval 208 to 499 (DHRKLGTELK…LTEHCAGEFP (292 aa)) is catalytic. C300, H351, and H476 together coordinate Zn(2+).

Belongs to the class-II aminoacyl-tRNA synthetase family. Homodimer. Zn(2+) serves as cofactor.

The protein localises to the cytoplasm. It catalyses the reaction tRNA(Thr) + L-threonine + ATP = L-threonyl-tRNA(Thr) + AMP + diphosphate + H(+). In terms of biological role, catalyzes the attachment of threonine to tRNA(Thr) in a two-step reaction: L-threonine is first activated by ATP to form Thr-AMP and then transferred to the acceptor end of tRNA(Thr). Also edits incorrectly charged L-seryl-tRNA(Thr). The chain is Threonine--tRNA ligase from Campylobacter jejuni subsp. jejuni serotype O:6 (strain 81116 / NCTC 11828).